Reading from the N-terminus, the 316-residue chain is MCVDVPCENCIVRNDGLRLKCSECAEGSSKLFPRQNRQHSSAISHISNSSPPTRKRSIDGGYTSGTDSANTSEIVIKKRLTFSKKSHSTSEIETWNAHLQVDYHLETVTPSCSTVYQKITSETLIEIMQKLSQIEFMQKYILIDCRYDYEYNGGHIKGAQSLFNPETAADFFFNKDGSKKINRIPIFYCEYSQKRGPTMANNLREVDRKLNSNIYPRCDYEEIYLLEGGYKNFYAFTRGLEKEQRVQLCEPDNYVIMFDDRYKAELRKHQFHKKNVSKPMKKWSSTTSVISILTTSGTRISTLRQTCDPIHEHDAH.

Residues 35-65 (QNRQHSSAISHISNSSPPTRKRSIDGGYTSG) are disordered. A compositionally biased stretch (low complexity) spans 39-50 (HSSAISHISNSS). One can recognise a Rhodanese domain in the interval 136–242 (FMQKYILIDC…FYAFTRGLEK (107 aa)).

It belongs to the MPI phosphatase family.

It catalyses the reaction O-phospho-L-tyrosyl-[protein] + H2O = L-tyrosyl-[protein] + phosphate. The sequence is that of M-phase inducer phosphatase cdc-25.3 (cdc-25.3) from Caenorhabditis elegans.